The sequence spans 479 residues: GMP reductase (479 aa).

2 CBS domains span residues 96–153 (VLDT…VRDI) and 154–212 (AVTD…ATDS). NADP(+)-binding positions include 246–248 (DTA) and 296–298 (GVG). Catalysis depends on Cys-303, which acts as the Thioimidate intermediate.

The protein belongs to the IMPDH/GMPR family. GuaB1 subfamily. A monovalent cation is required as a cofactor.

The enzyme catalyses IMP + NH4(+) + NADP(+) = GMP + NADPH + 2 H(+). Its pathway is purine metabolism; IMP biosynthesis via salvage pathway. Involved in the purine-salvage pathway. Catalyzes the NADPH-dependent conversion of GMP to IMP. In Mycobacterium bovis (strain ATCC BAA-935 / AF2122/97), this protein is GMP reductase.